Reading from the N-terminus, the 184-residue chain is ATP synthase subunit b 1 (184 aa).

A helical transmembrane segment spans residues leucine 4–serine 24.

Belongs to the ATPase B chain family. In terms of assembly, F-type ATPases have 2 components, F(1) - the catalytic core - and F(0) - the membrane proton channel. F(1) has five subunits: alpha(3), beta(3), gamma(1), delta(1), epsilon(1). F(0) has three main subunits: a(1), b(2) and c(10-14). The alpha and beta chains form an alternating ring which encloses part of the gamma chain. F(1) is attached to F(0) by a central stalk formed by the gamma and epsilon chains, while a peripheral stalk is formed by the delta and b chains.

The protein localises to the cell inner membrane. F(1)F(0) ATP synthase produces ATP from ADP in the presence of a proton or sodium gradient. F-type ATPases consist of two structural domains, F(1) containing the extramembraneous catalytic core and F(0) containing the membrane proton channel, linked together by a central stalk and a peripheral stalk. During catalysis, ATP synthesis in the catalytic domain of F(1) is coupled via a rotary mechanism of the central stalk subunits to proton translocation. Functionally, component of the F(0) channel, it forms part of the peripheral stalk, linking F(1) to F(0). This Cereibacter sphaeroides (strain ATCC 17023 / DSM 158 / JCM 6121 / CCUG 31486 / LMG 2827 / NBRC 12203 / NCIMB 8253 / ATH 2.4.1.) (Rhodobacter sphaeroides) protein is ATP synthase subunit b 1.